A 154-amino-acid chain; its full sequence is Small ribosomal subunit protein uS15 (154 aa).

Basic residues predominate over residues 1 to 11; sequence MSRLHAHKRYH. The interval 1–24 is disordered; the sequence is MSRLHAHKRYHGQSGSKRPLRTTK.

This sequence belongs to the universal ribosomal protein uS15 family. In terms of assembly, part of the 30S ribosomal subunit.

This Nanoarchaeum equitans (strain Kin4-M) protein is Small ribosomal subunit protein uS15.